Here is a 275-residue protein sequence, read N- to C-terminus: Thymidylate synthase (275 aa).

Residue 138–139 (RR) participates in dUMP binding. C158 (nucleophile) is an active-site residue. DUMP contacts are provided by residues 178–181 (RSCD), N189, and 219–221 (HIY). D181 is a binding site for (6R)-5,10-methylene-5,6,7,8-tetrahydrofolate. Residue A274 coordinates (6R)-5,10-methylene-5,6,7,8-tetrahydrofolate.

It belongs to the thymidylate synthase family. Bacterial-type ThyA subfamily. In terms of assembly, homodimer.

It is found in the cytoplasm. It carries out the reaction dUMP + (6R)-5,10-methylene-5,6,7,8-tetrahydrofolate = 7,8-dihydrofolate + dTMP. It functions in the pathway pyrimidine metabolism; dTTP biosynthesis. Functionally, catalyzes the reductive methylation of 2'-deoxyuridine-5'-monophosphate (dUMP) to 2'-deoxythymidine-5'-monophosphate (dTMP) while utilizing 5,10-methylenetetrahydrofolate (mTHF) as the methyl donor and reductant in the reaction, yielding dihydrofolate (DHF) as a by-product. This enzymatic reaction provides an intracellular de novo source of dTMP, an essential precursor for DNA biosynthesis. The polypeptide is Thymidylate synthase (Fusobacterium nucleatum subsp. nucleatum (strain ATCC 25586 / DSM 15643 / BCRC 10681 / CIP 101130 / JCM 8532 / KCTC 2640 / LMG 13131 / VPI 4355)).